Here is a 647-residue protein sequence, read N- to C-terminus: Protein FAM161A (647 aa).

2 disordered regions span residues 32–55 (RELG…TSME) and 143–175 (PAQH…GDSE). Residues 152–161 (SRSVSPSLAE) are compositionally biased toward polar residues. Coiled coils occupy residues 243–268 (IKSK…ECQK) and 518–544 (AIRK…VLNK). 2 disordered regions span residues 504 to 524 (QTPR…KREK) and 588 to 647 (DEHV…IEEI). Basic and acidic residues-rich tracts occupy residues 510 to 524 (ESSK…KREK) and 588 to 600 (DEHV…KKIP). Residues 613-638 (DLLDDEEDDKYDCESEEAEEEDAYST) are compositionally biased toward acidic residues.

Belongs to the FAM161 family.

It is found in the cytoplasm. The protein localises to the cytoskeleton. The protein resides in the cilium basal body. It localises to the cell projection. Its subcellular location is the cilium. It is found in the microtubule organizing center. The protein localises to the centrosome. The protein resides in the centriole. In terms of biological role, involved in ciliogenesis. In Xenopus laevis (African clawed frog), this protein is Protein FAM161A (fam161a).